We begin with the raw amino-acid sequence, 46 residues long: Osteocalcin 2 (46 aa).

The region spanning 1 to 43 (AVPAGTLSPLQMESLREVCEVNVACDEMADTAGIVAAYTXFYG) is the Gla domain. Threonine 6 is subject to Phosphothreonine. Residues glutamate 13, glutamate 17, glutamate 20, and aspartate 26 each contribute to the Ca(2+) site. 3 positions are modified to 4-carboxyglutamate: glutamate 13, glutamate 17, and glutamate 20. A disulfide bridge links cysteine 19 with cysteine 25. Glutamate 27 bears the 4-carboxyglutamate mark.

Belongs to the osteocalcin/matrix Gla protein family. Gamma-carboxyglutamate residues are formed by vitamin K dependent carboxylation by GGCX. These residues are essential for the binding of calcium.

It localises to the secreted. The carboxylated form is one of the main organic components of the bone matrix, which constitutes 1-2% of the total bone protein. The carboxylated form binds strongly to apatite and calcium. This is Osteocalcin 2 from Solea senegalensis (Senegalese sole).